Here is a 219-residue protein sequence, read N- to C-terminus: Cell division protein B2 (219 aa).

Part of a cell division machinery. This is Cell division protein B2 from Sulfolobus acidocaldarius (strain ATCC 33909 / DSM 639 / JCM 8929 / NBRC 15157 / NCIMB 11770).